The primary structure comprises 320 residues: Cyclin-H (320 aa).

S5 bears the Phosphoserine; by CDK8 mark. The residue at position 132 (S132) is a Phosphoserine. S304 carries the phosphoserine; by CDK8 modification.

This sequence belongs to the cyclin family. Cyclin C subfamily. As to quaternary structure, associates primarily with CDK7 and MAT1 to form the CAK complex. CAK can further associate with the core-TFIIH to form the TFIIH basal transcription factor.

It is found in the nucleus. In terms of biological role, regulates CDK7, the catalytic subunit of the CDK-activating kinase (CAK) enzymatic complex. CAK activates the cyclin-associated kinases CDK1, CDK2, CDK4 and CDK6 by threonine phosphorylation. CAK complexed to the core-TFIIH basal transcription factor activates RNA polymerase II by serine phosphorylation of the repetitive C-terminal domain (CTD) of its large subunit (POLR2A), allowing its escape from the promoter and elongation of the transcripts. Involved in cell cycle control and in RNA transcription by RNA polymerase II. Its expression and activity are constant throughout the cell cycle. The protein is Cyclin-H (CCNH) of Bos taurus (Bovine).